Here is a 176-residue protein sequence, read N- to C-terminus: Glyoxalase domain-containing protein RDO1 (176 aa).

Positions Ser-53 to Tyr-172 constitute a VOC domain. Glu-168 serves as the catalytic Proton donor/acceptor.

The protein belongs to the glyoxalase I family.

Its pathway is secondary metabolite biosynthesis. In terms of biological role, glyoxalase domain-containing protein; part of the gene cluster that mediates the biosynthesis of itaconic acid and 2-hydroxyparaconate. Cis-aconitate is secreted by the mitochondrial tricarboxylate transporter MTT1. In the cytosol cis-aconitate is converted into trans-aconitate via isomerization by the aconitate-delta-isomerase ADI1. Decarboxylation of trans-aconitate by the trans-aconitate decarboxylase TAD1 then leads then to the production of itaconic acid. The cytochrome P450 monooxygenase CYP3 further converts itaconate to 2-hydroxyparaconate via oxidation of the double bond, leading to a transient epoxide, which can subsequently be lactonized to produce 2-hydroxyparaconate. Secretion of itaconate and possibly 2-hydroxyparaconate into the medium is mediated by the major facilitator ITP1. The glyoxalase domain-containing protein RDO1 is not involved in the biosynthesis of itaconate and 2-hydroxyparaconate, however, it might play a role in the further conversion of 2-hydroxyparaconate to itatartarate. The chain is Glyoxalase domain-containing protein RDO1 from Mycosarcoma maydis (Corn smut fungus).